Here is a 360-residue protein sequence, read N- to C-terminus: DNA replication and repair protein RecF (360 aa).

30-37 (GQNGSGKT) serves as a coordination point for ATP.

The protein belongs to the RecF family.

Its subcellular location is the cytoplasm. The RecF protein is involved in DNA metabolism; it is required for DNA replication and normal SOS inducibility. RecF binds preferentially to single-stranded, linear DNA. It also seems to bind ATP. The polypeptide is DNA replication and repair protein RecF (Shewanella putrefaciens (strain CN-32 / ATCC BAA-453)).